A 353-amino-acid polypeptide reads, in one-letter code: Photosystem II protein D1 (353 aa).

Threonine 2 bears the N-acetylthreonine mark. A Phosphothreonine modification is found at threonine 2. The next 3 helical transmembrane spans lie at 29–46, 118–133, and 142–156; these read YIGW…TATS, HFLL…EWEL, and WIAV…AATA. Residue histidine 118 participates in chlorophyll a binding. Tyrosine 126 is a pheophytin a binding site. Residues aspartate 170 and glutamate 189 each coordinate [CaMn4O5] cluster. The chain crosses the membrane as a helical span at residues 197-218; that stretch reads FHMLGVAGVFGGSLFSAMHGSL. Residue histidine 198 participates in chlorophyll a binding. A quinone is bound by residues histidine 215 and 264–265; that span reads SF. A Fe cation-binding site is contributed by histidine 215. Histidine 272 is a Fe cation binding site. The chain crosses the membrane as a helical span at residues 274-288; the sequence is FLAAWPVVGIWFTAL. [CaMn4O5] cluster is bound by residues histidine 332, glutamate 333, aspartate 342, and alanine 344. Residues 345–353 constitute a propeptide that is removed on maturation; the sequence is AIEAPSTNG.

Belongs to the reaction center PufL/M/PsbA/D family. In terms of assembly, PSII is composed of 1 copy each of membrane proteins PsbA, PsbB, PsbC, PsbD, PsbE, PsbF, PsbH, PsbI, PsbJ, PsbK, PsbL, PsbM, PsbT, PsbX, PsbY, PsbZ, Psb30/Ycf12, at least 3 peripheral proteins of the oxygen-evolving complex and a large number of cofactors. It forms dimeric complexes. Requires The D1/D2 heterodimer binds P680, chlorophylls that are the primary electron donor of PSII, and subsequent electron acceptors. It shares a non-heme iron and each subunit binds pheophytin, quinone, additional chlorophylls, carotenoids and lipids. D1 provides most of the ligands for the Mn4-Ca-O5 cluster of the oxygen-evolving complex (OEC). There is also a Cl(-1) ion associated with D1 and D2, which is required for oxygen evolution. The PSII complex binds additional chlorophylls, carotenoids and specific lipids. as cofactor. Post-translationally, tyr-161 forms a radical intermediate that is referred to as redox-active TyrZ, YZ or Y-Z. In terms of processing, C-terminally processed by CTPA; processing is essential to allow assembly of the oxygen-evolving complex and thus photosynthetic growth.

It localises to the plastid. It is found in the chloroplast thylakoid membrane. It catalyses the reaction 2 a plastoquinone + 4 hnu + 2 H2O = 2 a plastoquinol + O2. Its function is as follows. Photosystem II (PSII) is a light-driven water:plastoquinone oxidoreductase that uses light energy to abstract electrons from H(2)O, generating O(2) and a proton gradient subsequently used for ATP formation. It consists of a core antenna complex that captures photons, and an electron transfer chain that converts photonic excitation into a charge separation. The D1/D2 (PsbA/PsbD) reaction center heterodimer binds P680, the primary electron donor of PSII as well as several subsequent electron acceptors. This chain is Photosystem II protein D1, found in Nicotiana debneyi (Debney's tobacco).